The following is a 439-amino-acid chain: tRNA-2-methylthio-N(6)-dimethylallyladenosine synthase (439 aa).

In terms of domain architecture, MTTase N-terminal spans 2-119 (KYIYIKTWGC…LPKMIDEVEK (118 aa)). Positions 11, 48, 82, 156, 160, and 163 each coordinate [4Fe-4S] cluster. Residues 142–374 (KKKGYTADIS…QERINIQTML (233 aa)) enclose the Radical SAM core domain. The TRAM domain maps to 377-439 (RKMFGSIQSV…HTHSLKGELF (63 aa)).

Belongs to the methylthiotransferase family. MiaB subfamily. Monomer. Requires [4Fe-4S] cluster as cofactor.

The protein localises to the cytoplasm. The enzyme catalyses N(6)-dimethylallyladenosine(37) in tRNA + (sulfur carrier)-SH + AH2 + 2 S-adenosyl-L-methionine = 2-methylsulfanyl-N(6)-dimethylallyladenosine(37) in tRNA + (sulfur carrier)-H + 5'-deoxyadenosine + L-methionine + A + S-adenosyl-L-homocysteine + 2 H(+). In terms of biological role, catalyzes the methylthiolation of N6-(dimethylallyl)adenosine (i(6)A), leading to the formation of 2-methylthio-N6-(dimethylallyl)adenosine (ms(2)i(6)A) at position 37 in tRNAs that read codons beginning with uridine. The sequence is that of tRNA-2-methylthio-N(6)-dimethylallyladenosine synthase from Buchnera aphidicola subsp. Acyrthosiphon pisum (strain APS) (Acyrthosiphon pisum symbiotic bacterium).